We begin with the raw amino-acid sequence, 267 residues long: U6 snRNA phosphodiesterase 1 (267 aa).

A disordered region spans residues 1–72 (MNAAPLVGYS…EDDSARHGGR (72 aa)). The active-site Proton acceptor is the histidine 122. 122–124 (HLS) is an AMP binding site. UMP is bound by residues glutamine 166, tyrosine 204, and 208–212 (SFHVS). Residues tyrosine 204 and 206 to 212 (DPSFHVS) each bind AMP. The active-site Proton donor is the histidine 210.

It belongs to the 2H phosphoesterase superfamily. USB1 family. As to quaternary structure, interacts with PLRG1, CDC5L and PRPF19.

The protein localises to the nucleus. The catalysed reaction is a 3'-end uridylyl-uridine-RNA = a 3'-end 2',3'-cyclophospho-uridine-RNA + uridine. It catalyses the reaction a 3'-end uridylyl-adenosine-RNA = a 3'-end 2',3'-cyclophospho-uridine-RNA + adenosine. 3'-5' RNA exonuclease that trims the 3' end of oligo(U) and oligo(A) tracts of the pre-U6 small nuclear RNA (snRNA) molecule, leading to the formation of a mature U6 snRNA 3' end-terminated with a 2',3'-cyclic phosphate. Participates in the U6 snRNA 3' end processing that prevents U6 snRNA degradation. In addition also removes uridines from the 3' end of U6atac snRNA and possibly the vault RNA VTRNA1-1. In Rattus norvegicus (Rat), this protein is U6 snRNA phosphodiesterase 1.